Here is a 415-residue protein sequence, read N- to C-terminus: Tyrosine--tRNA ligase (415 aa).

Residue tyrosine 34 participates in L-tyrosine binding. Positions 39–48 match the 'HIGH' region motif; that stretch reads PSADSLHLGN. Positions 162 and 166 each coordinate L-tyrosine. Positions 224-228 match the 'KMSKS' region motif; that stretch reads KFGKS. Position 227 (lysine 227) interacts with ATP. An S4 RNA-binding domain is found at 346–413; sequence IKIIDLLNLA…KRNYFLILWN (68 aa).

The protein belongs to the class-I aminoacyl-tRNA synthetase family. TyrS type 1 subfamily. Homodimer.

Its subcellular location is the cytoplasm. The enzyme catalyses tRNA(Tyr) + L-tyrosine + ATP = L-tyrosyl-tRNA(Tyr) + AMP + diphosphate + H(+). Its function is as follows. Catalyzes the attachment of tyrosine to tRNA(Tyr) in a two-step reaction: tyrosine is first activated by ATP to form Tyr-AMP and then transferred to the acceptor end of tRNA(Tyr). The sequence is that of Tyrosine--tRNA ligase from Ureaplasma parvum serovar 3 (strain ATCC 27815 / 27 / NCTC 11736).